Consider the following 146-residue polypeptide: Hemoglobin subunit beta (146 aa).

Position 1 is an N-acetylvaline (Val1). Residues 2–146 (HLTDAEKALV…VATALAHKYH (145 aa)) enclose the Globin domain. A Phosphothreonine modification is found at Thr12. The residue at position 44 (Ser44) is a Phosphoserine. Lys59 bears the N6-acetyllysine mark. His63 provides a ligand contact to heme b. Position 82 is an N6-acetyllysine (Lys82). His92 contributes to the heme b binding site. Cys93 carries the S-nitrosocysteine modification. Residue Lys144 is modified to N6-acetyllysine.

The protein belongs to the globin family. As to quaternary structure, heterotetramer of two alpha chains and two beta chains. Red blood cells.

In terms of biological role, involved in oxygen transport from the lung to the various peripheral tissues. The chain is Hemoglobin subunit beta from Peromyscus crinitus (Canyon mouse).